A 171-amino-acid polypeptide reads, in one-letter code: Peptide deformylase (171 aa).

2 residues coordinate Fe cation: cysteine 91 and histidine 133. Residue glutamate 134 is part of the active site. Histidine 137 contributes to the Fe cation binding site.

It belongs to the polypeptide deformylase family. Requires Fe(2+) as cofactor.

The catalysed reaction is N-terminal N-formyl-L-methionyl-[peptide] + H2O = N-terminal L-methionyl-[peptide] + formate. Functionally, removes the formyl group from the N-terminal Met of newly synthesized proteins. Requires at least a dipeptide for an efficient rate of reaction. N-terminal L-methionine is a prerequisite for activity but the enzyme has broad specificity at other positions. The polypeptide is Peptide deformylase (Haemophilus ducreyi (strain 35000HP / ATCC 700724)).